A 70-amino-acid chain; its full sequence is Alpha-elapitoxin-Ast2a (70 aa).

5 disulfide bridges follow: Cys3–Cys20, Cys13–Cys41, Cys26–Cys30, Cys45–Cys56, and Cys57–Cys62. At Ser70 the chain carries Serine amide.

The protein belongs to the three-finger toxin family. Long-chain subfamily. Type II alpha-neurotoxin sub-subfamily. As to expression, expressed by the venom gland.

It is found in the secreted. Functionally, binds with high affinity to muscular (alpha-1/CHRNA1) and neuronal (alpha-7/CHRNA7) nicotinic acetylcholine receptor (nAChR) and inhibits acetylcholine from binding to the receptor, thereby impairing neuromuscular and neuronal transmission. The chain is Alpha-elapitoxin-Ast2a from Hydrophis stokesii (Stokes's sea snake).